Here is a 171-residue protein sequence, read N- to C-terminus: Shikimate kinase (171 aa).

14 to 19 is an ATP binding site; that stretch reads GAGKST. Mg(2+) is bound at residue Ser-18. Substrate-binding residues include Asp-36, Arg-60, and Gly-82. Arg-120 contributes to the ATP binding site. Arg-139 provides a ligand contact to substrate. Residue Gln-156 participates in ATP binding.

The protein belongs to the shikimate kinase family. As to quaternary structure, monomer. Requires Mg(2+) as cofactor.

Its subcellular location is the cytoplasm. It carries out the reaction shikimate + ATP = 3-phosphoshikimate + ADP + H(+). It participates in metabolic intermediate biosynthesis; chorismate biosynthesis; chorismate from D-erythrose 4-phosphate and phosphoenolpyruvate: step 5/7. Its function is as follows. Catalyzes the specific phosphorylation of the 3-hydroxyl group of shikimic acid using ATP as a cosubstrate. The sequence is that of Shikimate kinase from Psychromonas ingrahamii (strain DSM 17664 / CCUG 51855 / 37).